We begin with the raw amino-acid sequence, 244 residues long: 7-cyano-7-deazaguanine synthase (244 aa).

14–24 contacts ATP; it reads FSGGQDSATCV. Residues Cys202, Cys217, Cys220, and Cys223 each coordinate Zn(2+).

It belongs to the QueC family. Zn(2+) is required as a cofactor.

The enzyme catalyses 7-carboxy-7-deazaguanine + NH4(+) + ATP = 7-cyano-7-deazaguanine + ADP + phosphate + H2O + H(+). Its pathway is purine metabolism; 7-cyano-7-deazaguanine biosynthesis. In terms of biological role, catalyzes the ATP-dependent conversion of 7-carboxy-7-deazaguanine (CDG) to 7-cyano-7-deazaguanine (preQ(0)). In Burkholderia lata (strain ATCC 17760 / DSM 23089 / LMG 22485 / NCIMB 9086 / R18194 / 383), this protein is 7-cyano-7-deazaguanine synthase.